We begin with the raw amino-acid sequence, 191 residues long: Protein DMP10 (191 aa).

Transmembrane regions (helical) follow at residues 15 to 35, 48 to 68, 114 to 134, and 158 to 178; these read FANL…PSFS, LLTI…SFTD, LSFV…ALAV, and LMIK…FAIF.

The protein belongs to the plant DMP1 protein family. As to expression, restricted to flowers.

Its subcellular location is the membrane. In terms of biological role, involved in membrane remodeling. The protein is Protein DMP10 of Arabidopsis thaliana (Mouse-ear cress).